The chain runs to 415 residues: Serine/threonine transporter SstT (415 aa).

The next 9 membrane-spanning stretches (helical) occupy residues 21–41, 45–65, 83–103, 142–162, 193–213, 217–237, 299–319, 331–351, and 358–378; these read ILLGLAAGIILASLSTQAALA, LGTLFVGALKAVAPILVLMLV, ILFLYLIGTFSAALIAVVLSV, ALLNANYIGILVWAVGLGLAF, LGIFGLVASTLAETGFGALWG, LLMVLIGGMLLVALVINPLIV, MAGAAITITVLALAAVHTLGI, VVASICACGASGVAGGSLLLI, and FGISNDIAMQVVAVGFIIGVL.

This sequence belongs to the dicarboxylate/amino acid:cation symporter (DAACS) (TC 2.A.23) family.

It is found in the cell inner membrane. It catalyses the reaction L-serine(in) + Na(+)(in) = L-serine(out) + Na(+)(out). It carries out the reaction L-threonine(in) + Na(+)(in) = L-threonine(out) + Na(+)(out). Functionally, involved in the import of serine and threonine into the cell, with the concomitant import of sodium (symport system). This Pectobacterium carotovorum subsp. carotovorum (strain PC1) protein is Serine/threonine transporter SstT.